The primary structure comprises 316 residues: DNA-directed RNA polymerase III subunit RPC6 (316 aa).

Alanine 2 carries the post-translational modification N-acetylalanine. Glycyl lysine isopeptide (Lys-Gly) (interchain with G-Cter in SUMO2) cross-links involve residues lysine 5 and lysine 7. Residues cysteine 287, cysteine 290, cysteine 296, and cysteine 307 each coordinate [4Fe-4S] cluster.

This sequence belongs to the eukaryotic RPC34/RPC39 RNA polymerase subunit family. In terms of assembly, component of the RNA polymerase III complex consisting of 17 subunits: a ten-subunit horseshoe-shaped catalytic core composed of POLR3A/RPC1, POLR3B/RPC2, POLR1C/RPAC1, POLR1D/RPAC2, POLR3K/RPC10, POLR2E/RPABC1, POLR2F/RPABC2, POLR2H/RPABC3, POLR2K/RPABC4 and POLR2L/RPABC5; a mobile stalk composed of two subunits POLR3H/RPC8 and CRCP/RPC9, protruding from the core and functioning primarily in transcription initiation; and additional subunits homologous to general transcription factors of the RNA polymerase II machinery, POLR3C/RPC3-POLR3F/RPC6-POLR3G/RPC7 heterotrimer required for transcription initiation and POLR3D/RPC4-POLR3E/RPC5 heterodimer involved in both transcription initiation and termination. Directly interacts with POLR3C. Interacts with TBP and TFIIIB90 and GTF3C4. Interacts with MAF1. As part of the RNA polymerase III complex, interacts with PKP2.

The protein resides in the nucleus. Functionally, DNA-dependent RNA polymerase catalyzes the transcription of DNA into RNA using the four ribonucleoside triphosphates as substrates. Specific peripheric component of RNA polymerase III (Pol III) which synthesizes small non-coding RNAs including 5S rRNA, snRNAs, tRNAs and miRNAs from at least 500 distinct genomic loci. Part of POLR3C/RPC3-POLR3F/RPC6-POLR3G/RPC7 heterotrimer that coordinates the dynamics of Pol III stalk and clamp modules during the transition from apo to elongation state. Pol III plays a key role in sensing and limiting infection by intracellular bacteria and DNA viruses, including varicella zoster virus. Acts as a nuclear and cytosolic DNA sensor detecting AT-rich DNA, involved in innate immune response. Can sense non-self dsDNA that serves as template for transcription into dsRNA. The non-self RNA polymerase III transcripts, such as Epstein-Barr virus-encoded RNAs (EBERs) induce type I interferon and NF-kappa-B through the RIG-I pathway. Preferentially binds double-stranded DNA (dsDNA). This is DNA-directed RNA polymerase III subunit RPC6 from Mus musculus (Mouse).